The primary structure comprises 331 residues: Ribosomal RNA small subunit methyltransferase C (331 aa).

It belongs to the methyltransferase superfamily. RsmC family. As to quaternary structure, monomer.

It localises to the cytoplasm. The catalysed reaction is guanosine(1207) in 16S rRNA + S-adenosyl-L-methionine = N(2)-methylguanosine(1207) in 16S rRNA + S-adenosyl-L-homocysteine + H(+). Functionally, specifically methylates the guanine in position 1207 of 16S rRNA in the 30S particle. In Pseudomonas putida (strain W619), this protein is Ribosomal RNA small subunit methyltransferase C.